The following is a 234-amino-acid chain: Adenosine 5'-phosphosulfate reductase (234 aa).

4 residues coordinate [4Fe-4S] cluster: Cys-120, Cys-121, Cys-203, and Cys-206. Residue Cys-229 is the Nucleophile; cysteine thiosulfonate intermediate of the active site.

This sequence belongs to the PAPS reductase family. CysH subfamily. [4Fe-4S] cluster serves as cofactor.

Its subcellular location is the cytoplasm. It carries out the reaction [thioredoxin]-disulfide + sulfite + AMP + 2 H(+) = adenosine 5'-phosphosulfate + [thioredoxin]-dithiol. Its pathway is sulfur metabolism; hydrogen sulfide biosynthesis; sulfite from sulfate. Catalyzes the formation of sulfite from adenosine 5'-phosphosulfate (APS) using thioredoxin as an electron donor. This chain is Adenosine 5'-phosphosulfate reductase, found in Bacillus cereus (strain 03BB102).